The following is a 550-amino-acid chain: Hydroxylamine reductase (550 aa).

The [2Fe-2S] cluster site is built by cysteine 3, cysteine 6, cysteine 18, and cysteine 25. 8 residues coordinate hybrid [4Fe-2O-2S] cluster: histidine 249, glutamate 273, cysteine 317, cysteine 405, cysteine 433, cysteine 458, glutamate 492, and lysine 494. Cysteine 405 bears the Cysteine persulfide mark.

Belongs to the HCP family. It depends on [2Fe-2S] cluster as a cofactor. Requires hybrid [4Fe-2O-2S] cluster as cofactor.

It is found in the cytoplasm. It carries out the reaction A + NH4(+) + H2O = hydroxylamine + AH2 + H(+). Catalyzes the reduction of hydroxylamine to form NH(3) and H(2)O. This is Hydroxylamine reductase from Salmonella schwarzengrund (strain CVM19633).